Consider the following 186-residue polypeptide: Peptidoglycan-recognition protein SD (186 aa).

An N-terminal signal peptide occupies residues 1–18; the sequence is MTWIGLLIVGLTAIAVQG. In terms of domain architecture, N-acetylmuramoyl-L-alanine amidase spans 47-169; it reads AVIAHTAGGA…RQVSATMSPG (123 aa). An intrachain disulfide couples C57 to C63. The N-linked (GlcNAc...) asparagine glycan is linked to N181.

It belongs to the N-acetylmuramoyl-L-alanine amidase 2 family.

It is found in the secreted. Functionally, peptidoglycan-recognition protein that plays a key role in innate immunity by binding to peptidoglycans (PGN) of Gram-positive bacteria and activating the Toll pathway. Has no activity against on Gram-negative bacteria and fungi. Shows some partial redundancy with PRPGP-SA in Gram-positive bacteria recognition. May act by activating the proteolytic cleavage of Spatzle and the subsequent activation of Toll pathway. Recognizes S.aureus PGN. This is Peptidoglycan-recognition protein SD (PGRP-SD) from Drosophila simulans (Fruit fly).